A 445-amino-acid chain; its full sequence is ATP synthase subunit b-delta (445 aa).

The ATP synthase subunit b stretch occupies residues Met1–Ala168. The chain crosses the membrane as a helical span at residues Ile3–Val23. The ATP synthase subunit delta stretch occupies residues Ser169–Asp445.

In the N-terminal section; belongs to the ATPase B chain family. The protein in the C-terminal section; belongs to the ATPase delta chain family. As to quaternary structure, F-type ATPases have 2 components, F(1) - the catalytic core - and F(0) - the membrane proton channel. F(1) has five subunits: alpha(3), beta(3), gamma(1), delta(1), epsilon(1). F(0) has three main subunits: a(1), b(2) and c(10-14). The alpha and beta chains form an alternating ring which encloses part of the gamma chain. F(1) is attached to F(0) by a central stalk formed by the gamma and epsilon chains, while a peripheral stalk is formed by the delta and b chains.

The protein localises to the cell membrane. Its function is as follows. F(1)F(0) ATP synthase produces ATP from ADP in the presence of a proton or sodium gradient. F-type ATPases consist of two structural domains, F(1) containing the extramembraneous catalytic core and F(0) containing the membrane proton channel, linked together by a central stalk and a peripheral stalk. During catalysis, ATP synthesis in the catalytic domain of F(1) is coupled via a rotary mechanism of the central stalk subunits to proton translocation. Functionally, this fusion protein includes a component of the F(0) channel (subunit b) and of the F(1) subunit (subunit delta). Two copies of subunit b and one of delta together form the peripheral 'stator' stalk which links F(1) to F(0). In Mycolicibacterium vanbaalenii (strain DSM 7251 / JCM 13017 / BCRC 16820 / KCTC 9966 / NRRL B-24157 / PYR-1) (Mycobacterium vanbaalenii), this protein is ATP synthase subunit b-delta (atpFH).